The primary structure comprises 148 residues: Large ribosomal subunit protein bL9 (148 aa).

This sequence belongs to the bacterial ribosomal protein bL9 family.

Binds to the 23S rRNA. This is Large ribosomal subunit protein bL9 from Methylococcus capsulatus (strain ATCC 33009 / NCIMB 11132 / Bath).